A 486-amino-acid chain; its full sequence is MTDTATRPVASDSVAGVGRIVRVTGPVVDIEFPHDSIPPVYNALKTTITIGEDSTEITLEIALHLGDDVVRAIALKPTDGLVRGQEVRDTGAAISVPVGDITKGKVFNVTGDILNNEGGEPIEITERWPIHRKPPMFDQLESKTQLFETGIKVIDLLTPYVQGGKIGLFGGAGVGKTVLIQEMIQRVAQDHGGVSVFAGVGERTREGNDLIMEMEEAGVFDKTALVFGQMDEPPGTRLRVALSALTMAEYFRDVKNQDVLLFIDNIFRFTQAGSEVSTLLGRMPSAVGYQPNLADEMGVLQERITSTRGHSITSLQAIYVPADDYTDPAPATTFAHLDATTELSREIASRGLYPAVDPLTSTSRILDPRYLGQAHYDTATRVKAILQKNKELQEIIAILGVDELSEEDKVTVSRARRIQQFLSQNTYMAKKFTGVEGSTVPLKNTIESFSKIADGDYDHVAEQAFFNVGDLDDVERRWSEIQKENG.

170 to 177 serves as a coordination point for ATP; sequence GGAGVGKT.

This sequence belongs to the ATPase alpha/beta chains family. F-type ATPases have 2 components, CF(1) - the catalytic core - and CF(0) - the membrane proton channel. CF(1) has five subunits: alpha(3), beta(3), gamma(1), delta(1), epsilon(1). CF(0) has three main subunits: a(1), b(2) and c(9-12). The alpha and beta chains form an alternating ring which encloses part of the gamma chain. CF(1) is attached to CF(0) by a central stalk formed by the gamma and epsilon chains, while a peripheral stalk is formed by the delta and b chains.

Its subcellular location is the cell membrane. It catalyses the reaction ATP + H2O + 4 H(+)(in) = ADP + phosphate + 5 H(+)(out). In terms of biological role, produces ATP from ADP in the presence of a proton gradient across the membrane. The catalytic sites are hosted primarily by the beta subunits. In Clavibacter sepedonicus (Clavibacter michiganensis subsp. sepedonicus), this protein is ATP synthase subunit beta.